The primary structure comprises 474 residues: 2-succinylbenzoate--CoA ligase (474 aa).

This sequence belongs to the ATP-dependent AMP-binding enzyme family. MenE subfamily.

The catalysed reaction is 2-succinylbenzoate + ATP + CoA = 2-succinylbenzoyl-CoA + AMP + diphosphate. It participates in quinol/quinone metabolism; 1,4-dihydroxy-2-naphthoate biosynthesis; 1,4-dihydroxy-2-naphthoate from chorismate: step 5/7. It functions in the pathway quinol/quinone metabolism; menaquinone biosynthesis. Converts 2-succinylbenzoate (OSB) to 2-succinylbenzoyl-CoA (OSB-CoA). The sequence is that of 2-succinylbenzoate--CoA ligase from Staphylococcus epidermidis (strain ATCC 35984 / DSM 28319 / BCRC 17069 / CCUG 31568 / BM 3577 / RP62A).